The following is a 395-amino-acid chain: Putative 8-amino-7-oxononanoate synthase (395 aa).

Substrate is bound at residue R22. 109–110 (GY) lines the pyridoxal 5'-phosphate pocket. Residue H139 coordinates substrate. Residues S187, 212–215 (DEAH), and 241–244 (TFSK) each bind pyridoxal 5'-phosphate. An N6-(pyridoxal phosphate)lysine modification is found at K244. Position 358 (T358) interacts with substrate.

The protein belongs to the class-II pyridoxal-phosphate-dependent aminotransferase family. BioF subfamily. As to quaternary structure, homodimer. The cofactor is pyridoxal 5'-phosphate.

It carries out the reaction 6-carboxyhexanoyl-[ACP] + L-alanine + H(+) = (8S)-8-amino-7-oxononanoate + holo-[ACP] + CO2. Its pathway is cofactor biosynthesis; biotin biosynthesis. In terms of biological role, catalyzes the decarboxylative condensation of pimeloyl-[acyl-carrier protein] and L-alanine to produce 8-amino-7-oxononanoate (AON), [acyl-carrier protein], and carbon dioxide. The protein is Putative 8-amino-7-oxononanoate synthase (bioF) of Magnetococcus marinus (strain ATCC BAA-1437 / JCM 17883 / MC-1).